The sequence spans 349 residues: Phenylalanine--tRNA ligase alpha subunit (349 aa).

E258 provides a ligand contact to Mg(2+).

The protein belongs to the class-II aminoacyl-tRNA synthetase family. Phe-tRNA synthetase alpha subunit type 1 subfamily. As to quaternary structure, tetramer of two alpha and two beta subunits. Mg(2+) is required as a cofactor.

It localises to the cytoplasm. The catalysed reaction is tRNA(Phe) + L-phenylalanine + ATP = L-phenylalanyl-tRNA(Phe) + AMP + diphosphate + H(+). In Rickettsia conorii (strain ATCC VR-613 / Malish 7), this protein is Phenylalanine--tRNA ligase alpha subunit.